The primary structure comprises 343 residues: Versiconal hemiacetal acetate reductase (343 aa).

The active-site Proton donor is the tyrosine 59. Residue histidine 144 participates in substrate binding. 229–239 contributes to the NADP(+) binding site; the sequence is SPVARGALARP.

This sequence belongs to the aldo/keto reductase family. Aldo/keto reductase 2 subfamily.

It carries out the reaction (2S)-versicolorone + NADP(+) = 1'-hydroxyversicolorone + NADPH + H(+). The catalysed reaction is (3S)-versiconol acetate + NADP(+) = (2S,3S)-versiconal hemiacetal acetate + NADPH + H(+). The enzyme catalyses (S)-versiconol + NADP(+) = (2S-3S)-versiconal hemiacetal + NADPH + H(+). Its function is as follows. Catalyzes 3 reactions: from hydroxyversicolorone (HVN) to versicolorone (VONE), from versiconal hemiacetal acetate (VHA) to versiconol acetate (VOAc) and from versiconal (VHOH) to versiconol (VOH). Probably not an aflatoxin biosynthesis gene: may be involved in the vertical branching steps connecting the main pathway from HVN to VHOH with the side pathway from VONE to VOH. This chain is Versiconal hemiacetal acetate reductase (vrdA), found in Aspergillus parasiticus.